Here is a 1338-residue protein sequence, read N- to C-terminus: Vascular endothelial growth factor receptor 1 (1338 aa).

An N-terminal signal peptide occupies residues 1–26 (MVSYWDTGVLLCALLSCLLLTGSSSG). At 27-758 (SKLKDPELSL…QGTSDKSNLE (732 aa)) the chain is on the extracellular side. 7 consecutive Ig-like C2-type domains span residues 32-123 (PELS…TESA), 151-214 (GREL…VNGH), 230-327 (IDVQ…TSVH), 335-421 (TVKH…LTAT), 428-553 (PQIY…FYIT), 556-654 (PNGF…KEIT), and 661-747 (PYLL…AYLT). Intrachain disulfides connect C53–C107 and C158–C207. N-linked (GlcNAc...) asparagine glycans are attached at residues N100, N164, N196, and N251. A disulfide bond links C252 and C311. N323, N402, N417, N474, N547, N597, N620, N625, and N666 each carry an N-linked (GlcNAc...) asparagine glycan. C454 and C535 are joined by a disulfide. C577 and C636 are disulfide-bonded. A disulfide bridge links C682 with C731. The chain crosses the membrane as a helical span at residues 759-780 (LITLTCTCVAATLFWLLLTLFI). The Cytoplasmic segment spans residues 781–1338 (RKMKRSSSEI…SVVLYSTPPI (558 aa)). The 332-residue stretch at 827–1158 (LKLGKSLGRG…ELVEKLGDLL (332 aa)) folds into the Protein kinase domain. ATP is bound by residues 833–841 (LGRGAFGKV) and K861. Y914 carries the phosphotyrosine; by autocatalysis modification. The span at 940 to 957 (PKKEKMEPGLEQGKKPRL) shows a compositional bias: basic and acidic residues. Positions 940–982 (PKKEKMEPGLEQGKKPRLDSVTSSESFASSGFQEDKSLSDVEE) are disordered. A compositionally biased stretch (polar residues) spans 959 to 971 (SVTSSESFASSGF). D1022 (proton acceptor) is an active-site residue. 7 positions are modified to phosphotyrosine; by autocatalysis: Y1053, Y1169, Y1213, Y1242, Y1309, Y1327, and Y1333.

The protein belongs to the protein kinase superfamily. Tyr protein kinase family. CSF-1/PDGF receptor subfamily. In terms of assembly, interacts with VEGFA, VEGFB and PGF. Monomer in the absence of bound VEGFA, VEGFB or PGF. Homodimer in the presence of bound VEGFA, VEGFB and PGF. Can also form a heterodimer with KDR. Interacts (when tyrosine phosphorylated) with CBL, CRK, GRB2, NCK1, PIK3R1, PLCG, PSEN1 and PTPN11. Probably also interacts with PTPRB. Interacts with RACK1. Identified in a complex with CBL and CD2AP. N-glycosylated. In terms of processing, ubiquitinated after VEGFA-mediated autophosphorylation, leading to proteolytic degradation. Post-translationally, autophosphorylated on tyrosine residues upon ligand binding. Autophosphorylation occurs in trans, i.e. one subunit of the dimeric receptor phosphorylates tyrosine residues on the other subunit. Phosphorylation at Tyr-1169 is important for interaction with PLCG. Phosphorylation at Tyr-1213 is important for interaction with PIK3R1, PTPN11, GRB2, and PLCG. Phosphorylation at Tyr-1333 is important for endocytosis and for interaction with CBL, NCK1 and CRK. Is probably dephosphorylated by PTPRB. Detected in normal lung, but also in placenta, liver, kidney, heart and brain tissues. Specifically expressed in most of the vascular endothelial cells, and also expressed in peripheral blood monocytes. Isoform 2 is strongly expressed in placenta. Isoform 3 is expressed in corneal epithelial cells (at protein level). Isoform 3 is expressed in vascular smooth muscle cells (VSMC).

Its subcellular location is the cell membrane. It is found in the endosome. It localises to the secreted. The protein resides in the cytoplasm. The enzyme catalyses L-tyrosyl-[protein] + ATP = O-phospho-L-tyrosyl-[protein] + ADP + H(+). Its activity is regulated as follows. Present in an inactive conformation in the absence of bound ligand. Binding of VEGFA, VEGFB or PGF leads to dimerization and activation by autophosphorylation on tyrosine residues. Tyrosine-protein kinase that acts as a cell-surface receptor for VEGFA, VEGFB and PGF, and plays an essential role in the development of embryonic vasculature, the regulation of angiogenesis, cell survival, cell migration, macrophage function, chemotaxis, and cancer cell invasion. Acts as a positive regulator of postnatal retinal hyaloid vessel regression. May play an essential role as a negative regulator of embryonic angiogenesis by inhibiting excessive proliferation of endothelial cells. Can promote endothelial cell proliferation, survival and angiogenesis in adulthood. Its function in promoting cell proliferation seems to be cell-type specific. Promotes PGF-mediated proliferation of endothelial cells, proliferation of some types of cancer cells, but does not promote proliferation of normal fibroblasts (in vitro). Has very high affinity for VEGFA and relatively low protein kinase activity; may function as a negative regulator of VEGFA signaling by limiting the amount of free VEGFA and preventing its binding to KDR. Modulates KDR signaling by forming heterodimers with KDR. Ligand binding leads to the activation of several signaling cascades. Activation of PLCG leads to the production of the cellular signaling molecules diacylglycerol and inositol 1,4,5-trisphosphate and the activation of protein kinase C. Mediates phosphorylation of PIK3R1, the regulatory subunit of phosphatidylinositol 3-kinase, leading to activation of phosphatidylinositol kinase and the downstream signaling pathway. Mediates activation of MAPK1/ERK2, MAPK3/ERK1 and the MAP kinase signaling pathway, as well as of the AKT1 signaling pathway. Phosphorylates SRC and YES1, and may also phosphorylate CBL. Promotes phosphorylation of AKT1 at 'Ser-473'. Promotes phosphorylation of PTK2/FAK1. Functionally, phosphorylates PLCG. In terms of biological role, may function as decoy receptor for VEGFA. Its function is as follows. Has a truncated kinase domain; it increases phosphorylation of SRC at 'Tyr-418' by unknown means and promotes tumor cell invasion. In Homo sapiens (Human), this protein is Vascular endothelial growth factor receptor 1 (FLT1).